The primary structure comprises 343 residues: Glycerol-3-phosphate dehydrogenase [NAD(P)+] (343 aa).

Ser-11, Trp-12, Arg-32, and Lys-106 together coordinate NADPH. 3 residues coordinate sn-glycerol 3-phosphate: Lys-106, Gly-137, and Ser-139. Ala-141 is a binding site for NADPH. Sn-glycerol 3-phosphate contacts are provided by Lys-192, Asp-245, Ser-255, Arg-256, and Asn-257. Lys-192 functions as the Proton acceptor in the catalytic mechanism. Arg-256 lines the NADPH pocket. NADPH-binding residues include Val-280 and Glu-282.

Belongs to the NAD-dependent glycerol-3-phosphate dehydrogenase family.

It localises to the cytoplasm. It catalyses the reaction sn-glycerol 3-phosphate + NAD(+) = dihydroxyacetone phosphate + NADH + H(+). The enzyme catalyses sn-glycerol 3-phosphate + NADP(+) = dihydroxyacetone phosphate + NADPH + H(+). It functions in the pathway membrane lipid metabolism; glycerophospholipid metabolism. Its function is as follows. Catalyzes the reduction of the glycolytic intermediate dihydroxyacetone phosphate (DHAP) to sn-glycerol 3-phosphate (G3P), the key precursor for phospholipid synthesis. This chain is Glycerol-3-phosphate dehydrogenase [NAD(P)+], found in Syntrophomonas wolfei subsp. wolfei (strain DSM 2245B / Goettingen).